The following is a 306-amino-acid chain: UDP-3-O-acyl-N-acetylglucosamine deacetylase (306 aa).

Zn(2+)-binding residues include histidine 79, histidine 239, and aspartate 243. Catalysis depends on histidine 266, which acts as the Proton donor.

It belongs to the LpxC family. Zn(2+) serves as cofactor.

The catalysed reaction is a UDP-3-O-[(3R)-3-hydroxyacyl]-N-acetyl-alpha-D-glucosamine + H2O = a UDP-3-O-[(3R)-3-hydroxyacyl]-alpha-D-glucosamine + acetate. It participates in glycolipid biosynthesis; lipid IV(A) biosynthesis; lipid IV(A) from (3R)-3-hydroxytetradecanoyl-[acyl-carrier-protein] and UDP-N-acetyl-alpha-D-glucosamine: step 2/6. Its function is as follows. Catalyzes the hydrolysis of UDP-3-O-myristoyl-N-acetylglucosamine to form UDP-3-O-myristoylglucosamine and acetate, the committed step in lipid A biosynthesis. This Haemophilus ducreyi (strain 35000HP / ATCC 700724) protein is UDP-3-O-acyl-N-acetylglucosamine deacetylase.